A 388-amino-acid polypeptide reads, in one-letter code: Mannosyl-3-phosphoglycerate synthase (388 aa).

This sequence belongs to the glycosyltransferase 2 family.

The protein localises to the cytoplasm. The catalysed reaction is (2R)-3-phosphoglycerate + GDP-alpha-D-mannose = 2-O-(alpha-D-mannosyl)-3-phosphoglycerate + GDP + H(+). The protein operates within carbohydrate biosynthesis; 2-(alpha-D-mannosyl)-D-glycerate biosynthesis; 2-(alpha-D-mannosyl)-D-glycerate from GDP-alpha-D-mannose (MPG route): step 1/2. Transfers a mannosyl group from GDP-mannose to phosphoglycerate to form mannosyl-3-phosphoglycerate (MPG). The protein is Mannosyl-3-phosphoglycerate synthase (mngA) of Aeropyrum pernix (strain ATCC 700893 / DSM 11879 / JCM 9820 / NBRC 100138 / K1).